The primary structure comprises 84 residues: Defensin-like protein 37 (84 aa).

The N-terminal stretch at 1 to 24 (MAVKLIYLFLFLYIALLISGRTMS) is a signal peptide. Cystine bridges form between cysteine 46-cysteine 67, cysteine 52-cysteine 79, and cysteine 56-cysteine 81.

It belongs to the DEFL family.

The protein localises to the secreted. The sequence is that of Defensin-like protein 37 (EDA21) from Arabidopsis thaliana (Mouse-ear cress).